Reading from the N-terminus, the 133-residue chain is Protein PROTON GRADIENT REGULATION 5, chloroplastic (133 aa).

A chloroplast-targeting transit peptide spans methionine 1–methionine 60.

This sequence belongs to the PGR5 family. As to quaternary structure, interacts with PGRL1A and PGRL1B. Disulfide bonds; Cys-11 and Cys-105 are probably involved in the formation of disulfide bridges with 'Cys-300' and 'Cys-303' of PGRL1A. 'Cys-272' and 'Cys-275' of PGRL1A may also be used to form the disulfide bridges, but in this case the cyclic electron flow is lost.

It localises to the plastid. The protein localises to the chloroplast thylakoid membrane. In terms of biological role, critical for growth under fluctuating-light conditions. Involved in the regulation of the cyclic electron flow (CEF) around Photosystem I. Essential for the reduction of PGRL1A by ferredoxin and for photoprotection. Contributes to maximize photosynthesis efficiency after a long dark adaptation via the regulation of non-photochemical quenching (NPQ); acts independently from DLDG1. Promotes the induction of steady-state proton motive force (pmf) and energy-dependent quenching (qE). The protein is Protein PROTON GRADIENT REGULATION 5, chloroplastic of Arabidopsis thaliana (Mouse-ear cress).